The following is a 380-amino-acid chain: Cytochrome b (380 aa).

4 consecutive transmembrane segments (helical) span residues 34 to 54 (FGSL…LLAM), 78 to 99 (WLIR…YFHI), 114 to 134 (WNTG…GYVL), and 179 to 199 (FFAL…IHLT). His-84 and His-98 together coordinate heme b. His-183 and His-197 together coordinate heme b. Residue His-202 coordinates a ubiquinone. Helical transmembrane passes span 227-247 (TKDI…ALFS), 289-309 (LGGV…PLLH), 321-341 (LSQL…WIGS), and 348-368 (FIII…ILFP).

It belongs to the cytochrome b family. The cytochrome bc1 complex contains 11 subunits: 3 respiratory subunits (MT-CYB, CYC1 and UQCRFS1), 2 core proteins (UQCRC1 and UQCRC2) and 6 low-molecular weight proteins (UQCRH/QCR6, UQCRB/QCR7, UQCRQ/QCR8, UQCR10/QCR9, UQCR11/QCR10 and a cleavage product of UQCRFS1). This cytochrome bc1 complex then forms a dimer. Heme b is required as a cofactor.

The protein localises to the mitochondrion inner membrane. In terms of biological role, component of the ubiquinol-cytochrome c reductase complex (complex III or cytochrome b-c1 complex) that is part of the mitochondrial respiratory chain. The b-c1 complex mediates electron transfer from ubiquinol to cytochrome c. Contributes to the generation of a proton gradient across the mitochondrial membrane that is then used for ATP synthesis. The chain is Cytochrome b (MT-CYB) from Pygoscelis papua (Gentoo penguin).